Consider the following 135-residue polypeptide: Evasin P1134 (135 aa).

The signal sequence occupies residues 1–31 (MEVKTFAFLQIAVFIALGIQIFAAVTAAADA). Intrachain disulfides connect cysteine 41/cysteine 63, cysteine 45/cysteine 65, and cysteine 56/cysteine 76. N-linked (GlcNAc...) asparagine glycosylation occurs at asparagine 44. Residues 88–112 (ETPSNSDLEAATPRPRKTLYPVRNP) are disordered.

It localises to the secreted. Functionally, salivary chemokine-binding protein which binds to host chemokine CXCL1. This chain is Evasin P1134, found in Ixodes ricinus (Common tick).